The chain runs to 242 residues: Small ribosomal subunit protein uS3 (242 aa).

Residues 39–110 form the KH type-2 domain; sequence IRKFIHKKYG…QVRINVVEVE (72 aa). Residues 216 to 242 form a disordered region; the sequence is QTMPVGANPRRRASRRPQQFEDRSNEG. Residues 233–242 are compositionally biased toward basic and acidic residues; it reads QQFEDRSNEG.

The protein belongs to the universal ribosomal protein uS3 family. In terms of assembly, part of the 30S ribosomal subunit. Forms a tight complex with proteins S10 and S14.

Functionally, binds the lower part of the 30S subunit head. Binds mRNA in the 70S ribosome, positioning it for translation. The sequence is that of Small ribosomal subunit protein uS3 from Synechococcus sp. (strain CC9902).